The following is a 176-amino-acid chain: Ribosome maturation factor RimM (176 aa).

The PRC barrel domain occupies proline 96–phenylalanine 176.

This sequence belongs to the RimM family. In terms of assembly, binds ribosomal protein uS19.

Its subcellular location is the cytoplasm. Functionally, an accessory protein needed during the final step in the assembly of 30S ribosomal subunit, possibly for assembly of the head region. Essential for efficient processing of 16S rRNA. May be needed both before and after RbfA during the maturation of 16S rRNA. It has affinity for free ribosomal 30S subunits but not for 70S ribosomes. The chain is Ribosome maturation factor RimM from Shewanella woodyi (strain ATCC 51908 / MS32).